Consider the following 238-residue polypeptide: ATP-dependent dethiobiotin synthetase BioD (238 aa).

An ATP-binding site is contributed by 12–17 (EVGKTV). Threonine 16 contributes to the Mg(2+) binding site. Residue lysine 37 is part of the active site. Threonine 41 serves as a coordination point for substrate. Residues aspartate 50, 109-112 (EGAG), 170-171 (GS), and 200-202 (PAG) each bind ATP. Positions 50 and 109 each coordinate Mg(2+).

It belongs to the dethiobiotin synthetase family. In terms of assembly, homodimer. Mg(2+) serves as cofactor.

The protein resides in the cytoplasm. The catalysed reaction is (7R,8S)-7,8-diammoniononanoate + CO2 + ATP = (4R,5S)-dethiobiotin + ADP + phosphate + 3 H(+). Its pathway is cofactor biosynthesis; biotin biosynthesis; biotin from 7,8-diaminononanoate: step 1/2. In terms of biological role, catalyzes a mechanistically unusual reaction, the ATP-dependent insertion of CO2 between the N7 and N8 nitrogen atoms of 7,8-diaminopelargonic acid (DAPA, also called 7,8-diammoniononanoate) to form a ureido ring. The sequence is that of ATP-dependent dethiobiotin synthetase BioD from Streptomyces coelicolor (strain ATCC BAA-471 / A3(2) / M145).